The sequence spans 110 residues: CHH-like protein (110 aa).

The signal sequence occupies residues 1 to 23 (MHLSSVQFAWAALVALAVSAAGA). Positions 24 to 35 (LPSSAPHHVERR) are excised as a propeptide. 3 disulfides stabilise this stretch: C42–C78, C58–C74, and C61–C87. Valine amide is present on V107.

This sequence belongs to the arthropod CHH/MIH/GIH/VIH hormone family.

The protein localises to the secreted. This Bombyx mori (Silk moth) protein is CHH-like protein (CHHL).